A 170-amino-acid chain; its full sequence is Non-classical export protein 102 (170 aa).

At 1–11 (MLAIGDVILRA) the chain is on the cytoplasmic side. One can recognise an MARVEL domain in the interval 6–141 (DVILRAFNFV…TFIFIASAIF (136 aa)). Residues 12–32 (FNFVFLVIALGLTGSLAATTI) traverse the membrane as a helical segment. Topologically, residues 33 to 38 (TQHNPQ) are extracellular. The helical transmembrane segment at 39-61 (INFAVFAAAFGLLTSSFYGVFAY) threads the bilayer. Over 62–76 (FVAAFAWPVILFVFD) the chain is Cytoplasmic. The helical transmembrane segment at 77-97 (FLNFVFTFAAATAIAAGIRAH) threads the bilayer. The Extracellular portion of the chain corresponds to 98–125 (SCSNQDYLDDNNIAQGSSGRCRKAQAST). Residues 126–146 (AFLYFSTFIFIASAIFSAISL) form a helical membrane-spanning segment. The Cytoplasmic portion of the chain corresponds to 147–170 (SKGGLFGHSSRPAPRTGVPTMSQV).

It belongs to the NCE102 family.

It localises to the cell membrane. In terms of biological role, involved in membrane organization. Involved in a novel pathway of export of proteins that lack a cleavable signal sequence. Non-classical export pathway also functions as an alternative clearance/detoxification pathway to eliminate damaged material, when the basic repair pathway is not sufficient. Regulates actin organization and subsequent morphogenesis and pathogenesis. The polypeptide is Non-classical export protein 102 (Candida albicans (strain SC5314 / ATCC MYA-2876) (Yeast)).